The following is a 442-amino-acid chain: 3-phosphoshikimate 1-carboxyvinyltransferase (442 aa).

3-phosphoshikimate contacts are provided by lysine 25, serine 26, and arginine 30. Position 25 (lysine 25) interacts with phosphoenolpyruvate. The phosphoenolpyruvate site is built by glycine 97 and arginine 125. 4 residues coordinate 3-phosphoshikimate: serine 170, glutamine 172, aspartate 323, and lysine 350. Residue glutamine 172 participates in phosphoenolpyruvate binding. The active-site Proton acceptor is the aspartate 323. Arginine 354 and arginine 399 together coordinate phosphoenolpyruvate.

The protein belongs to the EPSP synthase family. In terms of assembly, monomer.

The protein resides in the cytoplasm. It catalyses the reaction 3-phosphoshikimate + phosphoenolpyruvate = 5-O-(1-carboxyvinyl)-3-phosphoshikimate + phosphate. It functions in the pathway metabolic intermediate biosynthesis; chorismate biosynthesis; chorismate from D-erythrose 4-phosphate and phosphoenolpyruvate: step 6/7. In terms of biological role, catalyzes the transfer of the enolpyruvyl moiety of phosphoenolpyruvate (PEP) to the 5-hydroxyl of shikimate-3-phosphate (S3P) to produce enolpyruvyl shikimate-3-phosphate and inorganic phosphate. The chain is 3-phosphoshikimate 1-carboxyvinyltransferase from Bartonella henselae (strain ATCC 49882 / DSM 28221 / CCUG 30454 / Houston 1) (Rochalimaea henselae).